Consider the following 448-residue polypeptide: Glutamate--tRNA ligase 2 (448 aa).

Residues 9–19 (PSPTGKLHIGN) carry the 'HIGH' region motif. Residues 240–244 (KISKR) carry the 'KMSKS' region motif. K243 is a binding site for ATP.

The protein belongs to the class-I aminoacyl-tRNA synthetase family. Glutamate--tRNA ligase type 1 subfamily. As to quaternary structure, monomer.

It is found in the cytoplasm. It carries out the reaction tRNA(Glu) + L-glutamate + ATP = L-glutamyl-tRNA(Glu) + AMP + diphosphate. Its function is as follows. Catalyzes the attachment of glutamate to tRNA(Glu) in a two-step reaction: glutamate is first activated by ATP to form Glu-AMP and then transferred to the acceptor end of tRNA(Glu). The polypeptide is Glutamate--tRNA ligase 2 (Orientia tsutsugamushi (strain Boryong) (Rickettsia tsutsugamushi)).